The sequence spans 258 residues: 6-phosphogluconolactonase (258 aa).

The residue at position 2 (alanine 2) is an N-acetylalanine. The residue at position 49 (serine 49) is a Phosphoserine. Lysine 180 is modified (N6-acetyllysine).

Belongs to the glucosamine/galactosamine-6-phosphate isomerase family. 6-phosphogluconolactonase subfamily.

It localises to the cytoplasm. The enzyme catalyses 6-phospho-D-glucono-1,5-lactone + H2O = 6-phospho-D-gluconate + H(+). Its pathway is carbohydrate degradation; pentose phosphate pathway; D-ribulose 5-phosphate from D-glucose 6-phosphate (oxidative stage): step 2/3. Functionally, hydrolysis of 6-phosphogluconolactone to 6-phosphogluconate. This Bos taurus (Bovine) protein is 6-phosphogluconolactonase (PGLS).